A 410-amino-acid polypeptide reads, in one-letter code: FBD-associated F-box protein At5g38590 (410 aa).

The F-box domain occupies 1-47; the sequence is MDKINGLPDDLLVKILSYVPTDIAVSTSILSKRWEFLWMWLPNLDYT. An FBD domain is found at 335-385; that stretch reads GWNQPSSVPECLLSSLQIFKWPQYLGRPEDRDIAVYILKNARHLKKTTILA.

This chain is FBD-associated F-box protein At5g38590, found in Arabidopsis thaliana (Mouse-ear cress).